We begin with the raw amino-acid sequence, 126 residues long: Larval cuticle protein 2 (126 aa).

Residues 1–16 form the signal peptide; the sequence is MFKFVMILAVVGVATA. Residues 39–100 form the Chitin-binding type R&amp;R domain; it reads ADGFDSSLHT…PSGAWIPTPP (62 aa).

Its function is as follows. Component of the larval cuticle. This Drosophila melanogaster (Fruit fly) protein is Larval cuticle protein 2 (Lcp2).